Consider the following 106-residue polypeptide: Thioredoxin (106 aa).

Positions 2 to 106 (SHYIELTEEN…LKEQLNKLLG (105 aa)) constitute a Thioredoxin domain. A disulfide bridge links C30 with C33.

The protein belongs to the thioredoxin family.

Its function is as follows. Participates in various redox reactions through the reversible oxidation of its active center dithiol to a disulfide and catalyzes dithiol-disulfide exchange reactions. In Helicobacter pylori (strain J99 / ATCC 700824) (Campylobacter pylori J99), this protein is Thioredoxin (trxA).